A 324-amino-acid polypeptide reads, in one-letter code: Protease HtpX homolog (324 aa).

2 consecutive transmembrane segments (helical) span residues 7-24 and 29-46; these read ALLLAGLTALFMGVGYLI and GALIALVVAAAMNIFTYW. H130 provides a ligand contact to Zn(2+). Residue E131 is part of the active site. Zn(2+) is bound at residue H134. 2 helical membrane passes run 145–165 and 172–192; these read ITATIAGAISMVAQFGMFFGG and GPGLIGSLALMILAPLGAMLV. E201 serves as a coordination point for Zn(2+). Residues 288–305 are compositionally biased toward polar residues; it reads PASTFSRGAGTAASSGTP. Residues 288-324 form a disordered region; the sequence is PASTFSRGAGTAASSGTPRGTGRSPWGGQPRGRGPWG.

This sequence belongs to the peptidase M48B family. Zn(2+) is required as a cofactor.

It localises to the cell inner membrane. The chain is Protease HtpX homolog from Rhodopseudomonas palustris (strain TIE-1).